We begin with the raw amino-acid sequence, 250 residues long: Probable transcriptional regulatory protein SAV_6832 (250 aa).

The protein belongs to the TACO1 family.

The protein resides in the cytoplasm. This is Probable transcriptional regulatory protein SAV_6832 from Streptomyces avermitilis (strain ATCC 31267 / DSM 46492 / JCM 5070 / NBRC 14893 / NCIMB 12804 / NRRL 8165 / MA-4680).